The sequence spans 146 residues: Ubiquitin-conjugating enzyme E2 variant 1D (146 aa).

The 134-residue stretch at 13 to 146 folds into the UBC core domain; it reads PRNFRLLEEL…LVQPPEGTCF (134 aa).

Belongs to the ubiquitin-conjugating enzyme family. As to quaternary structure, heterodimer with UBC35 or UBC36. In terms of tissue distribution, expressed in roots, shoots, leaves, stems, flowers and pollen.

In terms of biological role, has no ubiquitin ligase activity on its own. The heterodimer with UBC catalyzes the synthesis of non-canonical poly-ubiquitin chains that are linked through 'Lys-63'. This type of poly-ubiquitination does not lead to protein degradation by the proteasome. Mediates transcriptional activation of target genes. May play a role in the control of progress through the cell cycle and differentiation. Involved in the error-free DNA repair pathway and contributes to the survival of cells after DNA damage. This chain is Ubiquitin-conjugating enzyme E2 variant 1D (UEV1D), found in Arabidopsis thaliana (Mouse-ear cress).